The following is a 160-amino-acid chain: Transcription antitermination protein NusB (160 aa).

This sequence belongs to the NusB family.

In terms of biological role, involved in transcription antitermination. Required for transcription of ribosomal RNA (rRNA) genes. Binds specifically to the boxA antiterminator sequence of the ribosomal RNA (rrn) operons. The chain is Transcription antitermination protein NusB from Rhizobium rhizogenes (strain K84 / ATCC BAA-868) (Agrobacterium radiobacter).